The chain runs to 319 residues: Acetaldehyde dehydrogenase 1 (319 aa).

Cys129 (acyl-thioester intermediate) is an active-site residue. NAD(+)-binding positions include 160–168 and Asn287; that span reads SAGPGTRAN.

This sequence belongs to the acetaldehyde dehydrogenase family.

The enzyme catalyses acetaldehyde + NAD(+) + CoA = acetyl-CoA + NADH + H(+). In Burkholderia lata (strain ATCC 17760 / DSM 23089 / LMG 22485 / NCIMB 9086 / R18194 / 383), this protein is Acetaldehyde dehydrogenase 1.